We begin with the raw amino-acid sequence, 251 residues long: Elongator complex protein 6 (251 aa).

Belongs to the ELP6 family. Component of the elongator complex composed of Elp1, Elp2, Elp3, Elp4, Elp5 and Elp6. The elongator complex associates with and stabilizes microtubules; efficient interaction requires the full complex. Interacts with InR/Insulin-like receptor; the interaction may stabilize Elp6.

The protein resides in the cytoplasm. It is found in the nucleus. It localises to the cytoskeleton. The protein localises to the spindle. Its pathway is tRNA modification; 5-methoxycarbonylmethyl-2-thiouridine-tRNA biosynthesis. In terms of biological role, component of the elongator complex, which is required for multiple tRNA modifications, including mcm5U (5-methoxycarbonylmethyl uridine), mcm5s2U (5-methoxycarbonylmethyl-2-thiouridine), and ncm5U (5-carbamoylmethyl uridine). The elongator complex catalyzes formation of carboxymethyluridine in the wobble base at position 34 in tRNAs. Binding by the elongator complex stabilizes microtubules and promotes their growth. This induces central spindle asymmetry, promoting polarized signaling endosome trafficking during asymmetric cell division and cell fate assignation of sensory organ precursor cells. Required in germ line cells for microtubule organization involved in oocyte polarization and chromosome organization. Involved in InR-TOR (insulin-like receptor-target of rapamycin) signaling regulation of cellular metabolism, autophagy and apoptosis. The protein is Elongator complex protein 6 of Drosophila melanogaster (Fruit fly).